The sequence spans 156 residues: Probable succinate transporter subunit YjjB (156 aa).

4 helical membrane passes run 7–27 (WALLQDMVLAAIPALGFAMVF), 54–74 (FGMDIEPASLLASIMIGMIGI), 86–106 (VFTVAAVIPMFPGISAYTAMI), and 128–148 (FLKASFIVGSLSIGLSLPGLW).

The protein belongs to the ThrE exporter (TC 2.A.79) family. As to quaternary structure, the transporter is composed of YjjB and YjjP.

The protein localises to the cell inner membrane. Functionally, involved in succinate export with YjjP. Both proteins are required for export. In Yersinia enterocolitica serotype O:8 / biotype 1B (strain NCTC 13174 / 8081), this protein is Probable succinate transporter subunit YjjB.